Consider the following 97-residue polypeptide: uncharacterized protein (97 aa).

This is an uncharacterized protein from Haemophilus influenzae (strain ATCC 51907 / DSM 11121 / KW20 / Rd).